We begin with the raw amino-acid sequence, 299 residues long: GTPase Era (299 aa).

Positions 5–175 (RSGFVCLVGR…IDVLAAALPP (171 aa)) constitute an Era-type G domain. A G1 region spans residues 13–20 (GRPNTGKS). 13 to 20 (GRPNTGKS) is a GTP binding site. Positions 39–43 (QTTRH) are G2. The segment at 60-63 (DTPG) is G3. Residues 60–64 (DTPGL) and 124–127 (TKID) each bind GTP. A G4 region spans residues 124-127 (TKID). The interval 154 to 156 (VSA) is G5. In terms of domain architecture, KH type-2 spans 206-285 (VRDELPHSLA…YLDLRVKVAK (80 aa)).

It belongs to the TRAFAC class TrmE-Era-EngA-EngB-Septin-like GTPase superfamily. Era GTPase family. In terms of assembly, monomer.

It localises to the cell envelope. The protein localises to the secreted. It is found in the cell wall. Exhibits GTPase activity. Binds RNA but is probably not involved in ribosome assembly in mycobacteria. This is GTPase Era from Mycolicibacterium paratuberculosis (strain ATCC BAA-968 / K-10) (Mycobacterium paratuberculosis).